Here is a 218-residue protein sequence, read N- to C-terminus: Cytidylate kinase (218 aa).

An ATP-binding site is contributed by 7-15 (GPSASGKSS).

The protein belongs to the cytidylate kinase family. Type 1 subfamily.

It localises to the cytoplasm. It carries out the reaction CMP + ATP = CDP + ADP. It catalyses the reaction dCMP + ATP = dCDP + ADP. This is Cytidylate kinase from Borrelia hermsii (strain HS1 / DAH).